The primary structure comprises 127 residues: Large ribosomal subunit protein bL20 (127 aa).

Belongs to the bacterial ribosomal protein bL20 family.

Binds directly to 23S ribosomal RNA and is necessary for the in vitro assembly process of the 50S ribosomal subunit. It is not involved in the protein synthesizing functions of that subunit. This is Large ribosomal subunit protein bL20 from Streptomyces griseus subsp. griseus (strain JCM 4626 / CBS 651.72 / NBRC 13350 / KCC S-0626 / ISP 5235).